Consider the following 200-residue polypeptide: Serine/arginine-rich splicing factor RSZ23 (200 aa).

One can recognise an RRM domain in the interval 2 to 71; the sequence is ARVYVGNLDP…NGWRVELSTK (70 aa). The CCHC-type zinc-finger motif lies at 86–103; it reads MKCYECGEPGHFARECRL. A disordered region spans residues 105 to 200; that stretch reads IGSGGLGSGR…REESPYANNA (96 aa). Residues 113–139 show a composition bias toward basic residues; the sequence is GRRRSRSRSRSPRYRGRSRSRSPRYRR.

It belongs to the splicing factor SR family. Extensively phosphorylated on serine residues in the RS domain. In terms of tissue distribution, expressed in roots, leaves and immature seeds.

The protein resides in the nucleus. Its function is as follows. Involved in pre-mRNA splicing. In protoplast assay, enhances splicing efficiency of WAXY intron 1 and alters the selection of the 5'-splice sites by stimulating site 1 (proximal site). This chain is Serine/arginine-rich splicing factor RSZ23 (RSZ23), found in Oryza sativa subsp. japonica (Rice).